A 399-amino-acid polypeptide reads, in one-letter code: S-adenosylmethionine synthase (399 aa).

Residue His19 coordinates ATP. Position 21 (Asp21) interacts with Mg(2+). Residue Glu47 coordinates K(+). Residues Glu60 and Gln103 each coordinate L-methionine. The flexible loop stretch occupies residues 103–113 (QSPDIAQGVNQ). ATP is bound by residues 179–181 (DGK), 246–247 (RF), Asp255, 261–262 (RK), Ala278, and Lys282. Asp255 serves as a coordination point for L-methionine. L-methionine is bound at residue Lys286.

Belongs to the AdoMet synthase family. In terms of assembly, homotetramer; dimer of dimers. The cofactor is Mg(2+). It depends on K(+) as a cofactor.

The protein resides in the cytoplasm. The catalysed reaction is L-methionine + ATP + H2O = S-adenosyl-L-methionine + phosphate + diphosphate. It participates in amino-acid biosynthesis; S-adenosyl-L-methionine biosynthesis; S-adenosyl-L-methionine from L-methionine: step 1/1. Its function is as follows. Catalyzes the formation of S-adenosylmethionine (AdoMet) from methionine and ATP. The overall synthetic reaction is composed of two sequential steps, AdoMet formation and the subsequent tripolyphosphate hydrolysis which occurs prior to release of AdoMet from the enzyme. This Halalkalibacterium halodurans (strain ATCC BAA-125 / DSM 18197 / FERM 7344 / JCM 9153 / C-125) (Bacillus halodurans) protein is S-adenosylmethionine synthase.